The primary structure comprises 566 residues: Glucose starvation modulator protein 1 (566 aa).

The zn(2)-C6 fungal-type DNA-binding region spans 20–48; it reads CVFCHQKHLQCSNERPCKNCVKRNIAHGC. 2 disordered regions span residues 63–92 and 250–270; these read GVPGAVSNKQSTPRKKLKTSPVSTSVSPMD and KQASPSPSNTSTSENNTNTLS. Residues 253-270 show a composition bias toward low complexity; sequence SPSPSNTSTSENNTNTLS.

This sequence belongs to the ERT1/acuK family.

It is found in the nucleus. Its function is as follows. Transcription factor which regulates nonfermentable carbon utilization. This Candida albicans (strain WO-1) (Yeast) protein is Glucose starvation modulator protein 1 (GSM1).